The following is a 508-amino-acid chain: Photosystem II CP47 reaction center protein (508 aa).

6 consecutive transmembrane segments (helical) span residues 21 to 36 (SVHIMHTALVAGWAGS), 101 to 115 (IVFSGLCFLAAIWHW), 140 to 156 (GIHLFLSGVACFGFGAF), 203 to 218 (IAAGTLGILAGLFHLS), 237 to 252 (VLSSSIAAVFFAAFVV), and 457 to 472 (SFALLFFFGHIWHGSR).

Belongs to the PsbB/PsbC family. PsbB subfamily. As to quaternary structure, PSII is composed of 1 copy each of membrane proteins PsbA, PsbB, PsbC, PsbD, PsbE, PsbF, PsbH, PsbI, PsbJ, PsbK, PsbL, PsbM, PsbT, PsbX, PsbY, PsbZ, Psb30/Ycf12, at least 3 peripheral proteins of the oxygen-evolving complex and a large number of cofactors. It forms dimeric complexes. The cofactor is Binds multiple chlorophylls. PSII binds additional chlorophylls, carotenoids and specific lipids..

Its subcellular location is the plastid. The protein localises to the chloroplast thylakoid membrane. Functionally, one of the components of the core complex of photosystem II (PSII). It binds chlorophyll and helps catalyze the primary light-induced photochemical processes of PSII. PSII is a light-driven water:plastoquinone oxidoreductase, using light energy to abstract electrons from H(2)O, generating O(2) and a proton gradient subsequently used for ATP formation. The protein is Photosystem II CP47 reaction center protein of Lepidium virginicum (Virginia pepperweed).